A 196-amino-acid polypeptide reads, in one-letter code: Peptidyl-tRNA hydrolase (196 aa).

Tyr-14 contributes to the tRNA binding site. The active-site Proton acceptor is the His-19. TRNA contacts are provided by Phe-64, Asn-66, and Asn-112.

This sequence belongs to the PTH family. Monomer.

Its subcellular location is the cytoplasm. The enzyme catalyses an N-acyl-L-alpha-aminoacyl-tRNA + H2O = an N-acyl-L-amino acid + a tRNA + H(+). In terms of biological role, hydrolyzes ribosome-free peptidyl-tRNAs (with 1 or more amino acids incorporated), which drop off the ribosome during protein synthesis, or as a result of ribosome stalling. Catalyzes the release of premature peptidyl moieties from peptidyl-tRNA molecules trapped in stalled 50S ribosomal subunits, and thus maintains levels of free tRNAs and 50S ribosomes. The protein is Peptidyl-tRNA hydrolase of Solibacter usitatus (strain Ellin6076).